The sequence spans 655 residues: Cyclomaltodextrin glucanotransferase (655 aa).

The first 30 residues, 1–30, serve as a signal peptide directing secretion; that stretch reads MKRNRFFNTSAAIAISIALNTFFCSMQTIA. Aspartate 55, asparagine 60, asparagine 61, glycine 79, and aspartate 81 together coordinate Ca(2+). 123-124 lines the substrate pocket; the sequence is YW. A Ca(2+)-binding site is contributed by asparagine 164. Residues histidine 165 and 217–220 each bind substrate; that span reads NLFN. Aspartate 223 contacts Ca(2+). Arginine 251 is a binding site for substrate. Aspartate 253 (nucleophile) is an active-site residue. A substrate-binding site is contributed by 256–257; that stretch reads KH. Histidine 257 contributes to the Ca(2+) binding site. Glutamate 287 serves as the catalytic Proton donor. Positions 362, 436, and 440 each coordinate substrate. Residues 554 to 655 enclose the CBM20 domain; that stretch reads AENPTVQSIN…NDTQTTNGSF (102 aa). The disordered stretch occupies residues 630–655; it reads TANVEWQSGANNQFNSNDTQTTNGSF.

The protein belongs to the glycosyl hydrolase 13 family. As to quaternary structure, monomer. The cofactor is Ca(2+).

It carries out the reaction Cyclizes part of a (1-&gt;4)-alpha-D-glucan chain by formation of a (1-&gt;4)-alpha-D-glucosidic bond.. The polypeptide is Cyclomaltodextrin glucanotransferase (cgt) (Klebsiella oxytoca).